A 183-amino-acid polypeptide reads, in one-letter code: Protein Syd (183 aa).

Belongs to the Syd family.

The protein localises to the cell inner membrane. In terms of biological role, interacts with the SecY protein in vivo. May bind preferentially to an uncomplexed state of SecY, thus functioning either as a chelating agent for excess SecY in the cell or as a regulatory factor that negatively controls the translocase function. The sequence is that of Protein Syd from Yersinia enterocolitica serotype O:8 / biotype 1B (strain NCTC 13174 / 8081).